Consider the following 185-residue polypeptide: Threonylcarbamoyl-AMP synthase (185 aa).

Positions 4-185 (SFRAQCAARV…LVTGQVIRPA (182 aa)) constitute a YrdC-like domain.

Belongs to the SUA5 family. TsaC subfamily.

The protein resides in the cytoplasm. The enzyme catalyses L-threonine + hydrogencarbonate + ATP = L-threonylcarbamoyladenylate + diphosphate + H2O. Functionally, required for the formation of a threonylcarbamoyl group on adenosine at position 37 (t(6)A37) in tRNAs that read codons beginning with adenine. Catalyzes the conversion of L-threonine, HCO(3)(-)/CO(2) and ATP to give threonylcarbamoyl-AMP (TC-AMP) as the acyladenylate intermediate, with the release of diphosphate. This is Threonylcarbamoyl-AMP synthase from Pseudomonas paraeruginosa (strain DSM 24068 / PA7) (Pseudomonas aeruginosa (strain PA7)).